The primary structure comprises 286 residues: Polyamine aminopropyltransferase (286 aa).

The 234-residue stretch at 5–238 folds into the PABS domain; it reads PLWHETLHDH…GIMTFAWASD (234 aa). Glutamine 33 is an S-methyl-5'-thioadenosine binding site. The spermidine site is built by histidine 64 and aspartate 88. Residues glutamate 108 and 140–141 contribute to the S-methyl-5'-thioadenosine site; that span reads DG. Catalysis depends on aspartate 158, which acts as the Proton acceptor. 158 to 161 serves as a coordination point for spermidine; sequence DCTD. S-methyl-5'-thioadenosine is bound at residue proline 165.

Belongs to the spermidine/spermine synthase family. As to quaternary structure, homodimer or homotetramer.

It localises to the cytoplasm. The enzyme catalyses S-adenosyl 3-(methylsulfanyl)propylamine + putrescine = S-methyl-5'-thioadenosine + spermidine + H(+). Its pathway is amine and polyamine biosynthesis; spermidine biosynthesis; spermidine from putrescine: step 1/1. In terms of biological role, catalyzes the irreversible transfer of a propylamine group from the amino donor S-adenosylmethioninamine (decarboxy-AdoMet) to putrescine (1,4-diaminobutane) to yield spermidine. The polypeptide is Polyamine aminopropyltransferase (Klebsiella pneumoniae subsp. pneumoniae (strain ATCC 700721 / MGH 78578)).